Reading from the N-terminus, the 804-residue chain is Leucine--tRNA ligase (804 aa).

The short motif at 39–50 (PFPSGKGLHVGH) is the 'HIGH' region element. A 'KMSKS' region motif is present at residues 573-577 (KMSKS). Lysine 576 provides a ligand contact to ATP.

It belongs to the class-I aminoacyl-tRNA synthetase family.

Its subcellular location is the cytoplasm. It catalyses the reaction tRNA(Leu) + L-leucine + ATP = L-leucyl-tRNA(Leu) + AMP + diphosphate. The chain is Leucine--tRNA ligase from Lactobacillus helveticus (strain DPC 4571).